The following is a 760-amino-acid chain: Catalase-peroxidase (760 aa).

The segment at 1 to 57 (MTDSQDNRTPESPQGVDRKAEGGCPVLHDGVTAQGSESENPAIDSPTPRTGGRPNSL) is disordered. The tryptophyl-tyrosyl-methioninium (Trp-Tyr) (with M-277) cross-link spans 129–251 (WHAAGTYRIH…LGAVQMGLIY (123 aa)). Residue His-130 is the Proton acceptor of the active site. The tryptophyl-tyrosyl-methioninium (Tyr-Met) (with W-129) cross-link spans 251–277 (YVNPEGPNGNPDPLASARDIRETFARM). Residue His-292 coordinates heme b.

It belongs to the peroxidase family. Peroxidase/catalase subfamily. In terms of assembly, homodimer or homotetramer. It depends on heme b as a cofactor. In terms of processing, formation of the three residue Trp-Tyr-Met cross-link is important for the catalase, but not the peroxidase activity of the enzyme.

The enzyme catalyses H2O2 + AH2 = A + 2 H2O. It carries out the reaction 2 H2O2 = O2 + 2 H2O. Its function is as follows. Bifunctional enzyme with both catalase and broad-spectrum peroxidase activity. The sequence is that of Catalase-peroxidase from Nocardioides sp. (strain ATCC BAA-499 / JS614).